Consider the following 644-residue polypeptide: Exoribonuclease 2 (644 aa).

Positions R189–K516 constitute an RNB domain. The S1 motif domain occupies D561–V643.

Belongs to the RNR ribonuclease family. RNase II subfamily.

The protein localises to the cytoplasm. The enzyme catalyses Exonucleolytic cleavage in the 3'- to 5'-direction to yield nucleoside 5'-phosphates.. In terms of biological role, involved in mRNA degradation. Hydrolyzes single-stranded polyribonucleotides processively in the 3' to 5' direction. This is Exoribonuclease 2 from Escherichia coli O6:K15:H31 (strain 536 / UPEC).